Consider the following 198-residue polypeptide: Recombination protein RecR (198 aa).

The C4-type zinc-finger motif lies at 57–72 (CRQCRTLSEEELCPQC). The Toprim domain maps to 80 to 174 (SLLCVVEGPL…TLSRIAHGVP (95 aa)).

The protein belongs to the RecR family.

Functionally, may play a role in DNA repair. It seems to be involved in an RecBC-independent recombinational process of DNA repair. It may act with RecF and RecO. The polypeptide is Recombination protein RecR (Pseudomonas paraeruginosa (strain DSM 24068 / PA7) (Pseudomonas aeruginosa (strain PA7))).